Consider the following 347-residue polypeptide: MDNCILEIRNLSHYYDNNGNKTLDNINLKIKKNEFITLLGPSGCGKTTLIKILGGFLSQKNGEIYFFSKEISKTSPNKREINTVFQNYALFPHMNVFDNISFGLRMKKTPKDIIKEKVKTSLSLIGMPKYAYRNINELSGGQKQRVAIARAMVMEPKLLLLDEPLSALDLKMRQEMQKELKKIQRQLGITFIYVTHDQEEALTMSDRIVVMNEGIILQVGTPEEIYNEPKTKFVADFIGESNIFDGTYKKELVVSLLGYEFECLDKGFEAEEAVDLVIRPEDIKLLPKGKGHLSGIITSAIFQGVHYEMTLEIQKTNWIVQSTRLTKVGEEVDIFLEPDDIHVMHKE.

Residues 6–238 (LEIRNLSHYY…PKTKFVADFI (233 aa)) enclose the ABC transporter domain. Residue 40–47 (GPSGCGKT) participates in ATP binding.

This sequence belongs to the ABC transporter superfamily. Spermidine/putrescine importer (TC 3.A.1.11.1) family. In terms of assembly, the complex is composed of two ATP-binding proteins (PotA), two transmembrane proteins (PotB and PotC) and a solute-binding protein (PotD).

It localises to the cell inner membrane. It carries out the reaction ATP + H2O + polyamine-[polyamine-binding protein]Side 1 = ADP + phosphate + polyamineSide 2 + [polyamine-binding protein]Side 1.. Part of the ABC transporter complex PotABCD involved in spermidine/putrescine import. Responsible for energy coupling to the transport system. This Borrelia garinii subsp. bavariensis (strain ATCC BAA-2496 / DSM 23469 / PBi) (Borreliella bavariensis) protein is Spermidine/putrescine import ATP-binding protein PotA.